The following is a 555-amino-acid chain: Oligo-1,6-glucosidase (555 aa).

The Nucleophile role is filled by aspartate 199. Glutamate 255 functions as the Proton donor in the catalytic mechanism.

The protein belongs to the glycosyl hydrolase 13 family.

It is found in the cytoplasm. It catalyses the reaction Hydrolysis of (1-&gt;6)-alpha-D-glucosidic linkages in some oligosaccharides produced from starch and glycogen by alpha-amylase, and in isomaltose.. In Heyndrickxia coagulans (Weizmannia coagulans), this protein is Oligo-1,6-glucosidase (malL).